A 1204-amino-acid chain; its full sequence is Probable cation-transporting ATPase 13A4 (1204 aa).

At Met1 to Arg32 the chain is on the cytoplasmic side. A helical membrane pass occupies residues Lys33–Trp53. Residues Lys54–Asp219 lie on the Extracellular side of the membrane. A helical membrane pass occupies residues Tyr220–Leu242. Over Arg243–Arg397 the chain is Cytoplasmic. The helical transmembrane segment at Phe398–Ala418 threads the bilayer. At Leu419–Asp433 the chain is on the extracellular side. Residues Val434–Thr454 form a helical membrane-spanning segment. At Gln455–Ser897 the chain is on the cytoplasmic side. Asp483 (4-aspartylphosphate intermediate) is an active-site residue. Mg(2+)-binding residues include Asp845 and Asp849. The chain crosses the membrane as a helical span at residues Phe898–Leu918. Residues Tyr919–Gln929 are Extracellular-facing. A helical membrane pass occupies residues Phe930–Ala950. The Cytoplasmic portion of the chain corresponds to Tyr951–Pro967. Residues Leu968–Leu988 traverse the membrane as a helical segment. The Extracellular portion of the chain corresponds to Met989–Asn1043. A helical membrane pass occupies residues Thr1044–Gly1064. The Cytoplasmic segment spans residues Lys1065–Tyr1075. A helical transmembrane segment spans residues Val1076–Ile1096. At Asp1097–Arg1113 the chain is on the extracellular side. The chain crosses the membrane as a helical span at residues Ile1114–Ile1134. At Ile1135–Leu1204 the chain is on the cytoplasmic side.

Belongs to the cation transport ATPase (P-type) (TC 3.A.3) family. Type V subfamily.

It is found in the membrane. The catalysed reaction is ATP + H2O = ADP + phosphate + H(+). This Gallus gallus (Chicken) protein is Probable cation-transporting ATPase 13A4 (ATP13A4).